Consider the following 713-residue polypeptide: Constitutive lysine decarboxylase (713 aa).

Position 367 is an N6-(pyridoxal phosphate)lysine (Lys-367).

It belongs to the Orn/Lys/Arg decarboxylase class-I family. Homodecamer; built of five dimers associated in a 5-fold symmetrical double-ring. It depends on pyridoxal 5'-phosphate as a cofactor.

It catalyses the reaction L-lysine + H(+) = cadaverine + CO2. Its function is as follows. Plays a role in lysine utilization by acting as a lysine decarboxylase. This Escherichia coli (strain K12) protein is Constitutive lysine decarboxylase (ldcC).